We begin with the raw amino-acid sequence, 299 residues long: Phosphatidylcholine-sterol acyltransferase (299 aa).

Residues Asn28 and Asn184 are each glycosylated (N-linked (GlcNAc...) asparagine). A disulfide bond links Cys225 and Cys268. Catalysis depends on Asp257, which acts as the Charge relay system. An N-linked (GlcNAc...) asparagine glycan is attached at Asn285. His289 (charge relay system) is an active-site residue. An N-linked (GlcNAc...) asparagine glycan is attached at Asn296.

It belongs to the AB hydrolase superfamily. Lipase family.

It localises to the secreted. It catalyses the reaction a sterol + a 1,2-diacyl-sn-glycero-3-phosphocholine = a sterol ester + a 1-acyl-sn-glycero-3-phosphocholine. With respect to regulation, APOA1 is the most potent activator in plasma. Also activated by APOE, APOC1 and APOA4. In terms of biological role, central enzyme in the extracellular metabolism of plasma lipoproteins. Synthesized mainly in the liver and secreted into plasma where it converts cholesterol and phosphatidylcholines (lecithins) to cholesteryl esters and lysophosphatidylcholines on the surface of high and low density lipoproteins (HDLs and LDLs). The cholesterol ester is then transported back to the liver. Has a preference for plasma 16:0-18:2 or 18:O-18:2 phosphatidylcholines. Also produced in the brain by primary astrocytes, and esterifies free cholesterol on nascent APOE-containing lipoproteins secreted from glia and influences cerebral spinal fluid (CSF) APOE- and APOA1 levels. Together with APOE and the cholesterol transporter ABCA1, plays a key role in the maturation of glial-derived, nascent lipoproteins. Required for remodeling high-density lipoprotein particles into their spherical forms. This is Phosphatidylcholine-sterol acyltransferase (LCAT) from Micromys minutus (European harvest mouse).